Consider the following 222-residue polypeptide: MGISRDSIHKRRATGGKQKQWRKKRKYEMGRQPANTKLSSNKTVRRIRVRGGNVKWRALRLDTGNYSWGSEATTRKTRVLDVVYNASNNELVRTKTLVKSAIVQVDAAPFKQWYLSHYGVELGRKKKSASSTKKDGEEGEEAAVAAPEEVKKSNHLLRKIASRQEGRSLDSHIEDQFASGRLLACISSRPGQCGRADGYILEGKELEFYMKKIQKKKGKGAA.

Disordered regions lie at residues 1 to 37 and 125 to 147; these read MGISRDSIHKRRATGGKQKQWRKKRKYEMGRQPANTK and KKKSASSTKKDGEEGEEAAVAAP. The span at 8–26 shows a compositional bias: basic residues; that stretch reads IHKRRATGGKQKQWRKKRK.

It belongs to the eukaryotic ribosomal protein eS8 family.

This chain is Small ribosomal subunit protein eS8z (RPS8A), found in Arabidopsis thaliana (Mouse-ear cress).